The following is a 65-amino-acid chain: MNMKILVLVAVLCLVVSTHAERHSKTDMGDSPMIQERKCLPPGKPCYGATQKIPCCGVCSHNNCT.

The signal sequence occupies residues methionine 1–alanine 20. A propeptide spanning residues glutamate 21 to arginine 37 is cleaved from the precursor. 3 disulfide bridges follow: cysteine 39–cysteine 56, cysteine 46–cysteine 59, and cysteine 55–cysteine 64.

The protein belongs to the neurotoxin 36 family. 02 subfamily. As to expression, expressed by the venom gland.

It localises to the secreted. Functionally, reversibly blocks N-type calcium channels (Cav2.2/CACNA1B) in rat dorsal root ganglion cells. Elicits no toxic symptoms in either vertebrates or invertebrates during a period of 48 hours post-injection, when it was assayed in vivo by direct injection into mice and cockroaches. The sequence is that of Hainantoxin-X.3 from Cyriopagopus hainanus (Chinese bird spider).